Reading from the N-terminus, the 305-residue chain is Homeobox protein ceh-23 (305 aa).

Disordered stretches follow at residues alanine 113–arginine 140 and arginine 262–asparagine 305. The segment covering alanine 120 to serine 135 has biased composition (polar residues). Positions histidine 211–glutamine 270 form a DNA-binding region, homeobox. Positions glycine 287 to asparagine 305 are enriched in acidic residues.

Belongs to the distal-less homeobox family.

It localises to the nucleus. Its function is as follows. Probable transcription factor. Required for differentiation of AIY interneurons, acting downstream of LIM/homeobox protein ttx-3. Modulates gene expression, acting downstream of AMP kinase aak-2/AMPK signaling. Modulates lifespan. This is Homeobox protein ceh-23 (ceh-23) from Caenorhabditis elegans.